We begin with the raw amino-acid sequence, 1133 residues long: Early transcription factor large subunit homolog (1133 aa).

In terms of domain architecture, Helicase ATP-binding spans 52–352 (KGGRAFFPCD…PNGQPLQRQQ (301 aa)). 99–106 (WQTGTGKS) serves as a coordination point for ATP. The short motif at 281-284 (DEIH) is the DEAH box element. In terms of domain architecture, Helicase C-terminal spans 524–724 (MMKDILSIIR…EGDKALRKHA (201 aa)).

The protein belongs to the DEAD box helicase family. DEAH subfamily.

It is found in the virion. It catalyses the reaction ATP + H2O = ADP + phosphate + H(+). Its function is as follows. Putative initation factor. The polypeptide is Early transcription factor large subunit homolog (African swine fever virus (isolate Tick/South Africa/Pretoriuskop Pr4/1996) (ASFV)).